A 212-amino-acid chain; its full sequence is Octanoyltransferase (212 aa).

In terms of domain architecture, BPL/LPL catalytic spans A31–I209. Residues R70–H77, S138–G140, and G151–A153 contribute to the substrate site. C169 serves as the catalytic Acyl-thioester intermediate.

The protein belongs to the LipB family.

It is found in the cytoplasm. It carries out the reaction octanoyl-[ACP] + L-lysyl-[protein] = N(6)-octanoyl-L-lysyl-[protein] + holo-[ACP] + H(+). It functions in the pathway protein modification; protein lipoylation via endogenous pathway; protein N(6)-(lipoyl)lysine from octanoyl-[acyl-carrier-protein]: step 1/2. Catalyzes the transfer of endogenously produced octanoic acid from octanoyl-acyl-carrier-protein onto the lipoyl domains of lipoate-dependent enzymes. Lipoyl-ACP can also act as a substrate although octanoyl-ACP is likely to be the physiological substrate. The sequence is that of Octanoyltransferase from Haemophilus influenzae (strain PittGG).